A 956-amino-acid chain; its full sequence is Glycine dehydrogenase (decarboxylating) (956 aa).

At Lys697 the chain carries N6-(pyridoxal phosphate)lysine.

Belongs to the GcvP family. As to quaternary structure, the glycine cleavage system is composed of four proteins: P, T, L and H. Pyridoxal 5'-phosphate serves as cofactor.

The catalysed reaction is N(6)-[(R)-lipoyl]-L-lysyl-[glycine-cleavage complex H protein] + glycine + H(+) = N(6)-[(R)-S(8)-aminomethyldihydrolipoyl]-L-lysyl-[glycine-cleavage complex H protein] + CO2. Its function is as follows. The glycine cleavage system catalyzes the degradation of glycine. The P protein binds the alpha-amino group of glycine through its pyridoxal phosphate cofactor; CO(2) is released and the remaining methylamine moiety is then transferred to the lipoamide cofactor of the H protein. The sequence is that of Glycine dehydrogenase (decarboxylating) from Cereibacter sphaeroides (strain KD131 / KCTC 12085) (Rhodobacter sphaeroides).